A 337-amino-acid polypeptide reads, in one-letter code: Glucokinase (337 aa).

An ATP-binding site is contributed by 11 to 16 (ADIGGT).

It belongs to the bacterial glucokinase family.

The protein localises to the cytoplasm. It carries out the reaction D-glucose + ATP = D-glucose 6-phosphate + ADP + H(+). This Xylella fastidiosa (strain 9a5c) protein is Glucokinase.